Consider the following 1176-residue polypeptide: Pesticidal crystal protein Cry1Cb (1176 aa).

Belongs to the delta endotoxin family.

Its function is as follows. Promotes colloidosmotic lysis by binding to the midgut epithelial cells of insects. Toxic to Spodoptera exigua and Trichoplusia ni. The sequence is that of Pesticidal crystal protein Cry1Cb (cry1Cb) from Bacillus thuringiensis subsp. galleriae.